The primary structure comprises 286 residues: Putative sugar uptake protein lin0215 (286 aa).

A run of 8 helical transmembrane segments spans residues 4–26, 33–55, 114–136, 149–167, 177–194, 207–226, 230–252, and 264–283; these read MIAL…FGGS, GMTL…VYTL, LRII…TSYA, GLIT…VVLI, AILP…IMTH, LLLI…MVHA, VGVA…GGIV, and LYVI…IGVA.

This sequence belongs to the GRP transporter (TC 2.A.7.5) family.

The protein resides in the cell membrane. This chain is Putative sugar uptake protein lin0215, found in Listeria innocua serovar 6a (strain ATCC BAA-680 / CLIP 11262).